A 669-amino-acid polypeptide reads, in one-letter code: DNA mismatch repair protein MutL (669 aa).

The disordered stretch occupies residues 357 to 379 (EQRQNTENNQEKTFSSEESNSKS). Residues 361–379 (NTENNQEKTFSSEESNSKS) show a composition bias toward polar residues.

Belongs to the DNA mismatch repair MutL/HexB family.

This protein is involved in the repair of mismatches in DNA. It is required for dam-dependent methyl-directed DNA mismatch repair. May act as a 'molecular matchmaker', a protein that promotes the formation of a stable complex between two or more DNA-binding proteins in an ATP-dependent manner without itself being part of a final effector complex. The sequence is that of DNA mismatch repair protein MutL from Staphylococcus aureus (strain Mu3 / ATCC 700698).